A 250-amino-acid polypeptide reads, in one-letter code: NADH-quinone oxidoreductase subunit C (250 aa).

The segment at 193–250 is disordered; it reads GMTPPLPGDEKADMPPIDDPMVTEGPEDTGAGARANAKAAEGTPADPPAMDDEEEDDA. Residues 222 to 236 show a composition bias toward low complexity; it reads GAGARANAKAAEGTP. The segment covering 241 to 250 has biased composition (acidic residues); that stretch reads AMDDEEEDDA.

The protein belongs to the complex I 30 kDa subunit family. As to quaternary structure, NDH-1 is composed of 14 different subunits. Subunits NuoB, C, D, E, F, and G constitute the peripheral sector of the complex.

The protein resides in the cell inner membrane. It catalyses the reaction a quinone + NADH + 5 H(+)(in) = a quinol + NAD(+) + 4 H(+)(out). NDH-1 shuttles electrons from NADH, via FMN and iron-sulfur (Fe-S) centers, to quinones in the respiratory chain. The immediate electron acceptor for the enzyme in this species is believed to be ubiquinone. Couples the redox reaction to proton translocation (for every two electrons transferred, four hydrogen ions are translocated across the cytoplasmic membrane), and thus conserves the redox energy in a proton gradient. This is NADH-quinone oxidoreductase subunit C from Erythrobacter litoralis (strain HTCC2594).